Here is a 91-residue protein sequence, read N- to C-terminus: Small ribosomal subunit protein uS19 (91 aa).

The protein belongs to the universal ribosomal protein uS19 family.

In terms of biological role, protein S19 forms a complex with S13 that binds strongly to the 16S ribosomal RNA. This is Small ribosomal subunit protein uS19 from Prochlorococcus marinus (strain SARG / CCMP1375 / SS120).